An 88-amino-acid polypeptide reads, in one-letter code: Small ribosomal subunit protein uS15 (88 aa).

The protein belongs to the universal ribosomal protein uS15 family. As to quaternary structure, part of the 30S ribosomal subunit. Forms a bridge to the 50S subunit in the 70S ribosome, contacting the 23S rRNA.

One of the primary rRNA binding proteins, it binds directly to 16S rRNA where it helps nucleate assembly of the platform of the 30S subunit by binding and bridging several RNA helices of the 16S rRNA. In terms of biological role, forms an intersubunit bridge (bridge B4) with the 23S rRNA of the 50S subunit in the ribosome. The chain is Small ribosomal subunit protein uS15 from Geotalea uraniireducens (strain Rf4) (Geobacter uraniireducens).